The primary structure comprises 448 residues: Clusterin (448 aa).

An N-terminal signal peptide occupies residues 1-21 (MKILLLCVALLLIWDNGMVLG). Positions 77-80 (KKKK) match the Nuclear localization signal motif. 5 disulfide bridges follow: C101/C312, C112/C304, C115/C301, C120/C294, and C128/C284. An N-linked (GlcNAc...) asparagine glycan is attached at N102. S132 carries the post-translational modification Phosphoserine. 5 N-linked (GlcNAc...) asparagine glycosylation sites follow: N144, N290, N327, N353, and N373. At S395 the chain carries Phosphoserine. Residues 442–446 (RRKSR) carry the Nuclear localization signal motif.

This sequence belongs to the clusterin family. In terms of assembly, antiparallel disulfide-linked heterodimer of an alpha chain and a beta chain. Self-associates and forms higher oligomers. Interacts with a broad range of misfolded proteins, including APP, APOC2 and LYZ. Slightly acidic pH promotes interaction with misfolded proteins. Forms high-molecular weight oligomers upon interaction with misfolded proteins. Interacts with APOA1, LRP2, CLUAP1 and PON1. Interacts with the complement membrane attack complex. Interacts (via alpha chain) with XRCC6. Interacts with SYVN1, COMMD1, BTRC, CUL1 and with ubiquitin and SCF (SKP1-CUL1-F-box protein) E3 ubiquitin-protein ligase complexes. Interacts (via alpha chain) with BAX in stressed cells, where BAX undergoes a conformation change leading to association with the mitochondrial membrane. Does not interact with BAX in unstressed cells. Found in a complex with LTF, CLU, EPPIN and SEMG1. Interacts (immaturely glycosylated pre-secreted form) with HSPA5; this interaction promotes CLU stability and facilitates stress-induced CLU retrotranslocation from the secretory pathway to the mitochondria, thereby reducing stress-induced apoptosis by stabilizing mitochondrial membrane integrity. Interacts with BCL2L1; this interaction releases and activates BAX and promotes cell death. Interacts with TGFBR2 and ACVR1. Interacts (secreted form) with STMN3; this interaction may act as an important modulator during neuronal differentiation. Interacts with VLDLR and LRP8. Proteolytically cleaved on its way through the secretory system, probably within the Golgi lumen. Proteolytic cleavage is not necessary for its chaperone activity. All non-secreted forms are not proteolytically cleaved. Chaperone activity of uncleaved forms is dependent on a non-reducing environment. In terms of processing, polyubiquitinated, leading to proteasomal degradation. Under cellular stress, the intracellular level of cleaved form is reduced due to proteasomal degradation. Post-translationally, extensively glycosylated with sulfated N-linked carbohydrates. About 30% of the protein mass is comprised of complex N-linked carbohydrate. Endoplasmic reticulum (ER) stress induces changes in glycosylation status and increases level of hypoglycosylated forms. Core carbohydrates are essential for chaperone activity. Non-secreted forms are hypoglycosylated or unglycosylated. Most abundant in stomach, liver, brain, and testis, with intermediate levels in heart, ovary and kidney.

The protein resides in the secreted. It is found in the nucleus. Its subcellular location is the cytoplasm. It localises to the mitochondrion membrane. The protein localises to the cytosol. The protein resides in the microsome. It is found in the endoplasmic reticulum. Its subcellular location is the mitochondrion. It localises to the perinuclear region. The protein localises to the cytoplasmic vesicle. The protein resides in the secretory vesicle. It is found in the chromaffin granule. Functions as extracellular chaperone that prevents aggregation of non native proteins. Prevents stress-induced aggregation of blood plasma proteins. Inhibits formation of amyloid fibrils by APP, APOC2, B2M, CALCA, CSN3, SNCA and aggregation-prone LYZ variants (in vitro). Does not require ATP. Maintains partially unfolded proteins in a state appropriate for subsequent refolding by other chaperones, such as HSPA8/HSC70. Does not refold proteins by itself. Binding to cell surface receptors triggers internalization of the chaperone-client complex and subsequent lysosomal or proteasomal degradation. When secreted, protects cells against apoptosis and against cytolysis by complement: inhibits assembly of the complement membrane attack complex (MAC) by preventing polymerization of C9 pore component of the MAC complex. Intracellular forms interact with ubiquitin and SCF (SKP1-CUL1-F-box protein) E3 ubiquitin-protein ligase complexes and promote the ubiquitination and subsequent proteasomal degradation of target proteins. Promotes proteasomal degradation of COMMD1 and IKBKB. Modulates NF-kappa-B transcriptional activity. Following stress, promotes apoptosis. Inhibits apoptosis when associated with the mitochondrial membrane by interference with BAX-dependent release of cytochrome c into the cytoplasm. Plays a role in the regulation of cell proliferation. Following ER stress, suppresses stress-induced apoptosis by stabilizing mitochondrial membrane integrity through interaction with HSPA5. When secreted, does not affect caspase or BAX-mediated intrinsic apoptosis and TNF-induced NF-kappa-B-activity. When secreted, acts as an important modulator during neuronal differentiation through interaction with STMN3. Plays a role in the clearance of immune complexes that arise during cell injury. This chain is Clusterin, found in Mus musculus (Mouse).